Reading from the N-terminus, the 1295-residue chain is Phosphoribosylformylglycinamidine synthase (1295 aa).

Residues 305–327 (WPGAATGSGGEIRDEGATGRGAK) are disordered. Residues 307–318 (GAATGSGGEIRD) and Ala-678 each bind ATP. Mg(2+)-binding residues include Glu-718, Asn-722, and Asp-884. ATP is bound at residue Ser-886. The Glutamine amidotransferase type-1 domain occupies 1042–1295 (VAVLREQGVN…IFRNARKQLG (254 aa)). The active-site Nucleophile is the Cys-1135. Catalysis depends on residues His-1260 and Glu-1262.

This sequence in the N-terminal section; belongs to the FGAMS family. In terms of assembly, monomer.

The protein localises to the cytoplasm. It catalyses the reaction N(2)-formyl-N(1)-(5-phospho-beta-D-ribosyl)glycinamide + L-glutamine + ATP + H2O = 2-formamido-N(1)-(5-O-phospho-beta-D-ribosyl)acetamidine + L-glutamate + ADP + phosphate + H(+). Its pathway is purine metabolism; IMP biosynthesis via de novo pathway; 5-amino-1-(5-phospho-D-ribosyl)imidazole from N(2)-formyl-N(1)-(5-phospho-D-ribosyl)glycinamide: step 1/2. Its function is as follows. Phosphoribosylformylglycinamidine synthase involved in the purines biosynthetic pathway. Catalyzes the ATP-dependent conversion of formylglycinamide ribonucleotide (FGAR) and glutamine to yield formylglycinamidine ribonucleotide (FGAM) and glutamate. The sequence is that of Phosphoribosylformylglycinamidine synthase from Shigella boydii serotype 4 (strain Sb227).